A 294-amino-acid chain; its full sequence is MNILENINTEKRNPRSLNLDSMSIAEAVSLMIDEEYGVIEALKEQHRNITEVILATSYSLRNGGRIIYIGAGTSGRLGILDAVECPPTFSVDYNTIVGLIAGGEKAFIQAQEGAEDAANFGKEDLQSINLTAKDIVIGIAASGRTPYVIGALEYANSIGATTVAISCTKQAKISKYAKYSIEAVPGPEVLTGSTRLKAGTTQKLILNMISTLSMVSVGKVYQNLMVDVKPTNQKLIERSKNIICEVTGVDYTTAEKFYLKANKSVKVAIVMILNNCDYEKALAILKNNNNFIKS.

The SIS domain maps to 56–219; the sequence is TSYSLRNGGR…STLSMVSVGK (164 aa). Catalysis depends on Glu-84, which acts as the Proton donor. The active site involves Glu-115.

It belongs to the GCKR-like family. MurNAc-6-P etherase subfamily. As to quaternary structure, homodimer.

It carries out the reaction N-acetyl-D-muramate 6-phosphate + H2O = N-acetyl-D-glucosamine 6-phosphate + (R)-lactate. The protein operates within amino-sugar metabolism; 1,6-anhydro-N-acetylmuramate degradation. Its pathway is amino-sugar metabolism; N-acetylmuramate degradation. It participates in cell wall biogenesis; peptidoglycan recycling. Functionally, specifically catalyzes the cleavage of the D-lactyl ether substituent of MurNAc 6-phosphate, producing GlcNAc 6-phosphate and D-lactate. Together with AnmK, is also required for the utilization of anhydro-N-acetylmuramic acid (anhMurNAc) either imported from the medium or derived from its own cell wall murein, and thus plays a role in cell wall recycling. The sequence is that of N-acetylmuramic acid 6-phosphate etherase from Francisella tularensis subsp. holarctica (strain LVS).